Here is a 439-residue protein sequence, read N- to C-terminus: Histidinol dehydrogenase (439 aa).

3 residues coordinate NAD(+): tyrosine 129, glutamine 193, and asparagine 222. Residues threonine 245, glutamine 267, and histidine 270 each contribute to the substrate site. Zn(2+) is bound by residues glutamine 267 and histidine 270. Catalysis depends on proton acceptor residues glutamate 336 and histidine 337. Residues histidine 337, aspartate 370, glutamate 424, and histidine 429 each contribute to the substrate site. Aspartate 370 contributes to the Zn(2+) binding site. Residue histidine 429 coordinates Zn(2+).

Belongs to the histidinol dehydrogenase family. Zn(2+) is required as a cofactor.

The catalysed reaction is L-histidinol + 2 NAD(+) + H2O = L-histidine + 2 NADH + 3 H(+). It functions in the pathway amino-acid biosynthesis; L-histidine biosynthesis; L-histidine from 5-phospho-alpha-D-ribose 1-diphosphate: step 9/9. Functionally, catalyzes the sequential NAD-dependent oxidations of L-histidinol to L-histidinaldehyde and then to L-histidine. In Cutibacterium acnes (strain DSM 16379 / KPA171202) (Propionibacterium acnes), this protein is Histidinol dehydrogenase.